The sequence spans 302 residues: Cyclin-dependent kinase 1-B (302 aa).

A Protein kinase domain is found at 4 to 287; sequence YTKIEKIGEG…ARKAMLHPYF (284 aa). ATP contacts are provided by residues 10 to 18 and Lys-33; that span reads IGEGTYGVV. Thr-14 bears the Phosphothreonine mark. At Tyr-15 the chain carries Phosphotyrosine; by wee1 and wee2. The active-site Proton acceptor is the Asp-128. A Phosphothreonine; by cak modification is found at Thr-161. Ser-277 carries the post-translational modification Phosphoserine.

The protein belongs to the protein kinase superfamily. CMGC Ser/Thr protein kinase family. CDC2/CDKX subfamily. As to quaternary structure, forms a stable but non-covalent complex with a regulatory subunit and with a cyclin. Interacts with spdya. In terms of processing, phosphorylation at Tyr-15 by wee1 and wee2 inhibits the protein kinase activity and acts negative regulator of entry into mitosis (G2 to M transition).

The protein resides in the nucleus. The catalysed reaction is L-seryl-[protein] + ATP = O-phospho-L-seryl-[protein] + ADP + H(+). It catalyses the reaction L-threonyl-[protein] + ATP = O-phospho-L-threonyl-[protein] + ADP + H(+). It carries out the reaction [DNA-directed RNA polymerase] + ATP = phospho-[DNA-directed RNA polymerase] + ADP + H(+). Its activity is regulated as follows. Phosphorylation at Thr-14 or Tyr-15 inactivates the enzyme, while phosphorylation at Thr-161 activates it. Functionally, plays a key role in the control of the eukaryotic cell cycle by modulating the centrosome cycle as well as mitotic onset; promotes G2-M transition via association with multiple interphase cyclins. During G2 and early mitosis, CDC25A/B/C-mediated dephosphorylation activates CDK1/cyclin complexes which phosphorylate several substrates that trigger at least centrosome separation, Golgi dynamics, nuclear envelope breakdown and chromosome condensation. Once chromosomes are condensed and aligned at the metaphase plate, CDK1 activity is switched off by WEE1- and PKMYT1-mediated phosphorylation to allow sister chromatid separation, chromosome decondensation, reformation of the nuclear envelope and cytokinesis. Catalyzes lamin (LMNA, LMNB1 and LMNB2) phosphorylation at the onset of mitosis, promoting nuclear envelope breakdown. This Xenopus laevis (African clawed frog) protein is Cyclin-dependent kinase 1-B (cdk1-b).